The chain runs to 552 residues: Gamma-aminobutyric acid receptor subunit alpha-4 (552 aa).

The first 35 residues, 1–35 (MVSVQKVPAIVLCSGVSLALLHVLCLATCLNESPG), serve as a signal peptide directing secretion. The Extracellular segment spans residues 36-259 (QNSKDEKLCP…FHLRRKMGYF (224 aa)). Residue Asn47 is glycosylated (N-linked (GlcNAc...) asparagine). Arg100 is a binding site for 4-aminobutanoate. 2 N-linked (GlcNAc...) asparagine glycosylation sites follow: Asn144 and Asn157. Thr163 contacts 4-aminobutanoate. A disulfide bridge connects residues Cys172 and Cys186. Residues 260 to 280 (MIQTYIPCIMTVILSQVSFWI) traverse the membrane as a helical segment. At 281 to 284 (NKES) the chain is on the cytoplasmic side. The chain crosses the membrane as a helical span at residues 285–305 (VPARTVFGITTVLTMTTLSIS). Over 306 to 318 (ARHSLPKVSYATA) the chain is Extracellular. The chain crosses the membrane as a helical span at residues 319 to 341 (MDWFIAVCFAFVFSALIEFAAVN). The Cytoplasmic portion of the chain corresponds to 342 to 515 (YFTNIQMQKA…PPPSGSGTSK (174 aa)). Disordered regions lie at residues 353 to 436 (KKIS…NPFS), 448 to 470 (ARGL…PLRS), and 486 to 513 (TTVN…GSGT). The segment covering 403 to 423 (RTEVGNHSSKTTAAQESSETT) has biased composition (polar residues). Composition is skewed to low complexity over residues 448-458 (ARGLSSAASPS) and 486-499 (TTVN…NVSA). The segment covering 500–509 (TPPPSAPPPS) has biased composition (pro residues). A helical transmembrane segment spans residues 516–538 (IDKYARILFPVTFGAFNMVYWVV). Topologically, residues 539 to 552 (YLSKDTMEKSESLM) are extracellular.

This sequence belongs to the ligand-gated ion channel (TC 1.A.9) family. Gamma-aminobutyric acid receptor (TC 1.A.9.5) subfamily. GABRA4 sub-subfamily. Heteropentamer, formed by a combination of alpha (GABRA1-6), beta (GABRB1-3), gamma (GABRG1-3), delta (GABRD), epsilon (GABRE), rho (GABRR1-3), pi (GABRP) and theta (GABRQ) chains, each subunit exhibiting distinct physiological and pharmacological properties. Expressed in the brain.

The protein localises to the cell membrane. It localises to the postsynaptic cell membrane. Potentiated by histamine. Functionally, alpha subunit of the heteropentameric ligand-gated chloride channel gated by gamma-aminobutyric acid (GABA), a major inhibitory neurotransmitter in the brain. GABA-gated chloride channels, also named GABA(A) receptors (GABAAR), consist of five subunits arranged around a central pore and contain GABA active binding site(s) located at the alpha and beta subunit interface(s). Alpha-4/GABRA4 subunit often assembles with delta or gamma-2 subunits, in combination with beta subunits. When activated by GABA, GABAARs selectively allow the flow of chloride anions across the cell membrane down their electrochemical gradient. GABAARs containing alpha-4 are predominantly extrasynaptic, contributing to tonic inhibition in dentate granule cells and thalamic relay neurons. Extrasynaptic alpha-4-containing GABAARs control levels of excitability and network activity. GABAAR containing alpha-4-beta-3-delta subunits can simultaneously bind GABA and histamine where histamine binds at the interface of two neighboring beta subunits, which may be involved in the regulation of sleep and wakefulness. This chain is Gamma-aminobutyric acid receptor subunit alpha-4, found in Rattus norvegicus (Rat).